Reading from the N-terminus, the 511-residue chain is MQTSTNTPGGRTFFGHPYPLSGLFLSEMWERFSFYGIRPLLILFMAATVFDGGMGLPREQASAIVGIFAGSMYLAALPGGLLADNWLGQQRAVWYGSILIALGHLSIALSAFFGNDLFFIGLVFIVLGTGLFKTCISVMVGTLYKPGDARRDGGFSLFYMGINMGSFIAPLLSGWLLRTHGWHWGFGIGGIGMLVALLIFRGFAIPAMKRYDAEVGLDSSWNKPTNQRQGVGRWVTAIMAVVVVIIALISQGVIPINPVMIASLLVYVIAASVTLYFIYLFAFAKMSRKDRARLLVCFILLVSAAFFWSAFEQKPTSFNLFANDYTDRMVMGFEIPTVWFQSINALFIILLAPVFSWAWPALAKKKIQPSSITKFVIGILCAAAGFAVMMYAAQHVLSSGGAGVSPLWLVMSILLLTLGELCLSPIGLATMTLLAPDRMRGQVMGLWFCASSLGNLAAGLIGGHVKADQLDMLPTLFARCSIALVICAAVLILLIVPIRRLMNNTQGQQTA.

The Cytoplasmic portion of the chain corresponds to 1-19 (MQTSTNTPGGRTFFGHPYP). A helical membrane pass occupies residues 20 to 45 (LSGLFLSEMWERFSFYGIRPLLILFM). The Periplasmic portion of the chain corresponds to 46–59 (AATVFDGGMGLPRE). The helical transmembrane segment at 60–84 (QASAIVGIFAGSMYLAALPGGLLAD) threads the bilayer. Over 85–88 (NWLG) the chain is Cytoplasmic. The chain crosses the membrane as a helical span at residues 89 to 109 (QQRAVWYGSILIALGHLSIAL). At 110 to 115 (SAFFGN) the chain is on the periplasmic side. Residues 116 to 138 (DLFFIGLVFIVLGTGLFKTCISV) traverse the membrane as a helical segment. Residues 139 to 149 (MVGTLYKPGDA) are Cytoplasmic-facing. A helical membrane pass occupies residues 150-175 (RRDGGFSLFYMGINMGSFIAPLLSGW). The Periplasmic segment spans residues 176–181 (LLRTHG). The helical transmembrane segment at 182 to 208 (WHWGFGIGGIGMLVALLIFRGFAIPAM) threads the bilayer. Over 209-232 (KRYDAEVGLDSSWNKPTNQRQGVG) the chain is Cytoplasmic. The helical transmembrane segment at 233–253 (RWVTAIMAVVVVIIALISQGV) threads the bilayer. At 254–256 (IPI) the chain is on the periplasmic side. Residues 257 to 279 (NPVMIASLLVYVIAASVTLYFIY) form a helical membrane-spanning segment. The Cytoplasmic portion of the chain corresponds to 280-294 (LFAFAKMSRKDRARL). Residues 295–321 (LVCFILLVSAAFFWSAFEQKPTSFNLF) traverse the membrane as a helical segment. Topologically, residues 322–335 (ANDYTDRMVMGFEI) are periplasmic. A helical membrane pass occupies residues 336–357 (PTVWFQSINALFIILLAPVFSW). The Cytoplasmic portion of the chain corresponds to 358–369 (AWPALAKKKIQP). The helical transmembrane segment at 370 to 396 (SSITKFVIGILCAAAGFAVMMYAAQHV) threads the bilayer. Topologically, residues 397 to 405 (LSSGGAGVS) are periplasmic. Residues 406–426 (PLWLVMSILLLTLGELCLSPI) form a helical membrane-spanning segment. The Cytoplasmic portion of the chain corresponds to 427–441 (GLATMTLLAPDRMRG). Residues 442 to 462 (QVMGLWFCASSLGNLAAGLIG) form a helical membrane-spanning segment. The Periplasmic segment spans residues 463 to 471 (GHVKADQLD). A helical transmembrane segment spans residues 472 to 496 (MLPTLFARCSIALVICAAVLILLIV). The Cytoplasmic segment spans residues 497 to 511 (PIRRLMNNTQGQQTA).

The protein belongs to the major facilitator superfamily. Proton-dependent oligopeptide transporter (POT/PTR) (TC 2.A.17) family.

It is found in the cell inner membrane. With respect to regulation, transport is inhibited by the proton ionophore carbonyl cyanide m-chlorophenylhydrazone (CCCP). Functionally, mediates the proton-dependent uptake of dipeptides. Shows higher affinity for dipeptides with a negatively charged amino acid residue at the N-terminal position, such as Asp-Ala and Glu-Ala. Also displays specificity for Ala-Ala, Ala-Tyr and Tyr-Ala. The protein is Peptide transporter YePEPT of Yersinia enterocolitica subsp. palearctica serotype O:3 (strain YE-P4).